Consider the following 337-residue polypeptide: Lipoate-protein ligase A (337 aa).

The 188-residue stretch at 29–216 (DQNQTILFLW…AFFNYYQTTV (188 aa)) folds into the BPL/LPL catalytic domain. ATP-binding positions include arginine 71, 76–79 (GAVF), and lysine 134. Residue lysine 134 participates in (R)-lipoate binding.

The protein belongs to the LplA family. In terms of assembly, monomer.

The protein localises to the cytoplasm. It catalyses the reaction L-lysyl-[lipoyl-carrier protein] + (R)-lipoate + ATP = N(6)-[(R)-lipoyl]-L-lysyl-[lipoyl-carrier protein] + AMP + diphosphate + H(+). It functions in the pathway protein modification; protein lipoylation via exogenous pathway; protein N(6)-(lipoyl)lysine from lipoate: step 1/2. The protein operates within protein modification; protein lipoylation via exogenous pathway; protein N(6)-(lipoyl)lysine from lipoate: step 2/2. In terms of biological role, catalyzes both the ATP-dependent activation of exogenously supplied lipoate to lipoyl-AMP and the transfer of the activated lipoyl onto the lipoyl domains of lipoate-dependent enzymes. The chain is Lipoate-protein ligase A from Blochmanniella floridana.